The primary structure comprises 3412 residues: Genome polyprotein (3412 aa).

Residues 2–15 (SKKPGKPGRNRVVN) are interaction with host EXOC1. The Cytoplasmic segment spans residues 2–108 (SKKPGKPGRN…PSKKRGGTRS (107 aa)). The tract at residues 37 to 72 (LLDGRGPVRFILAILTFFRFTALQPTEALKRRWRAV) is hydrophobic; homodimerization of capsid protein C. A propeptide spans 104–121 (GGTRSLLGLAALIGLASS) (ER anchor for the capsid protein C, removed in mature form by serine protease NS3). The helical transmembrane segment at 109–129 (LLGLAALIGLASSLQLSTYQG) threads the bilayer. Over 130-247 (KVLMSINKTD…TTKYLTKVEN (118 aa)) the chain is Extracellular. N-linked (GlcNAc...) asparagine; by host glycosylation occurs at Asn-136. A helical membrane pass occupies residues 248 to 268 (WVLRNPGYALVALAIGWMLGS). The Cytoplasmic segment spans residues 269–273 (NNTQR). Residues 274–288 (VVFVIMLMLIAPAYS) traverse the membrane as a helical segment. Over 289 to 741 (FNCLGTSNRD…QVFGGAFRTL (453 aa)) the chain is Extracellular. 8 cysteine pairs are disulfide-bonded: Cys-291/Cys-318, Cys-348/Cys-404, Cys-348/Cys-409, Cys-362/Cys-393, Cys-380/Cys-404, Cys-380/Cys-409, Cys-478/Cys-576, and Cys-593/Cys-624. The interval 386–399 (DRGWGNGCGLFGKG) is fusion peptide. The chain crosses the membrane as a helical span at residues 742 to 762 (FGGMSWITQGLLGALLLWMGL). Topologically, residues 763 to 768 (QARDRS) are cytoplasmic. The chain crosses the membrane as a helical span at residues 769–789 (ISLTLLAVGGILIFLATSVQA). Over 790 to 1214 (DSGCAIDLQR…AFAEMNTGGD (425 aa)) the chain is Extracellular. 2 disulfides stabilise this stretch: Cys-793–Cys-804 and Cys-844–Cys-932. 3 N-linked (GlcNAc...) asparagine; by host glycosylation sites follow: Asn-919, Asn-964, and Asn-996. Cystine bridges form between Cys-968–Cys-1012, Cys-1069–Cys-1118, Cys-1080–Cys-1101, Cys-1080–Cys-1102, Cys-1101–Cys-1105, and Cys-1102–Cys-1105. The helical transmembrane segment at 1215–1235 (VIHLALVAVFKVQPAFLAGLF) threads the bilayer. Over 1236-1245 (LRMQWSNQEN) the chain is Cytoplasmic. Residues 1246-1266 (ILMVIGAAFLQMAANDLKLEV) form a helical membrane-spanning segment. At 1267–1288 (LPILNAMSIAWMLIRAMKEGKV) the chain is on the lumenal side. The chain crosses the membrane as a helical span at residues 1289 to 1303 (AMYALPILCALTPGM). Residue Arg-1304 is a topological domain, cytoplasmic. A helical membrane pass occupies residues 1305-1325 (MAGLDVIRCLLLIIGIVTLLN). Topologically, residues 1326–1339 (ERRESVAKKKGGYL) are lumenal. The helical transmembrane segment at 1340 to 1360 (LAAALCQAGVCSPLIMMGGLI) threads the bilayer. At 1361–1369 (LAHPNGKRS) the chain is on the cytoplasmic side. A helical transmembrane segment spans residues 1370–1390 (WPASEVLTGVGLMCALAGGLL). Residues 1391-1393 (EFE) are Lumenal-facing. The helical transmembrane segment at 1394-1414 (ETSMVVPFAIAGLMYITYTVS) threads the bilayer. The Cytoplasmic portion of the chain corresponds to 1415–1471 (GKAAEMWIEKAADITWEQNAEITGTSPRLDVDLDSHGNFKLLNDPGAPVHLFALRFI). The segment at 1422-1461 (IEKAADITWEQNAEITGTSPRLDVDLDSHGNFKLLNDPGA) is interacts with and activates NS3 protease. Residues 1472–1492 (LLGLSARFHWFIPFGVLGFWL) constitute an intramembrane region (helical). The Cytoplasmic segment spans residues 1493 to 2167 (LGKHSKRGGA…KEALAELPDS (675 aa)). The 178-residue stretch at 1500-1677 (GGALWDVPSP…ERTEEPIPDA (178 aa)) folds into the Peptidase S7 domain. Residues His-1550, Asp-1574, and Ser-1634 each act as charge relay system; for serine protease NS3 activity in the active site. The 157-residue stretch at 1680 to 1836 (EEMLRKRKLT…DSNSPILDVE (157 aa)) folds into the Helicase ATP-binding domain. The important for RNA-binding stretch occupies residues 1684-1687 (RKRK). Residue 1693 to 1700 (LHPGAGKT) coordinates ATP. The short motif at 1784-1787 (DEAH) is the DEAH box element. The Helicase C-terminal domain occupies 1847 to 2011 (GYEWITNFTG…GLVAQMYQPE (165 aa)). The tract at residues 2162–2166 (AELPD) is regulates the ATPase activity of NS3 helicase. A helical transmembrane segment spans residues 2168 to 2188 (LETLLLIGMLCVMSMGTFIFL). Over 2189–2193 (MNRKG) the chain is Lumenal. Positions 2194–2214 (VGKMGLGAFVMTLATALLWAA) form an intramembrane region, helical. Position 2215 (Glu-2215) is a topological domain, lumenal. A helical transmembrane segment spans residues 2216-2236 (VPGTQIAGVLLIVFLLMIVLI). The Cytoplasmic portion of the chain corresponds to 2237–2251 (PEPEKQRSQTDNQLA). A helical transmembrane segment spans residues 2252–2266 (VFLICIMTLMGVVAA). The Lumenal segment spans residues 2267–2308 (NEMGLLEKTKSDIAKLFGSQPGSVGFATRTTPWDISLDIKPA). The helical intramembrane region spans 2309–2329 (TAWALYAAATMVMTPLIKHLI). At 2330–2376 (TTQYVNFSLTAIASQAGVLLGLTNGMPFTAMDLSVPLLVLGCWNQMT) the chain is on the lumenal side. The helical transmembrane segment at 2377-2397 (LPSLAVAVMLLAIHYAFMIPG) threads the bilayer. Residues 2398–2440 (WQAEAMRAAQRRTAAGIMKNAVVDGIVATDIPDLSPATPMTEK) are Cytoplasmic-facing. A helical transmembrane segment spans residues 2441-2461 (KMGQILLIAAAVLAVLVRPGI). The Lumenal portion of the chain corresponds to 2462–2466 (CSIKE). A helical membrane pass occupies residues 2467-2487 (FGVLGSAALVTLIEGTAGVVW). At 2488–3412 (NCTTAVGLCN…IGEEEYRDYM (925 aa)) the chain is on the cytoplasmic side. The mRNA cap 0-1 NS5-type MT domain occupies 2525–2790 (GGGKGATLGE…DVNLGSGTRS (266 aa)). Ser-2580 lines the S-adenosyl-L-methionine pocket. Residue Ser-2580 is modified to Phosphoserine. Lys-2585 (for 2'-O-MTase activity) is an active-site residue. S-adenosyl-L-methionine is bound by residues Gly-2610, Trp-2611, Thr-2628, Lys-2629, Asp-2655, and Val-2656. Asp-2670 acts as the For 2'-O-MTase activity in catalysis. Residue Ile-2671 coordinates S-adenosyl-L-methionine. Residues Lys-2706 and Glu-2742 each act as for 2'-O-MTase activity in the active site. Tyr-2744 provides a ligand contact to S-adenosyl-L-methionine. A compositionally biased stretch (basic and acidic residues) spans 2771–2780 (QNRSGPRYEE). Positions 2771–2791 (QNRSGPRYEEDVNLGSGTRSV) are disordered. Zn(2+)-binding residues include Glu-2964, His-2968, Cys-2973, and Cys-2976. The RdRp catalytic domain maps to 3054–3206 (GKMYADDTAG…KPIDDRFATA (153 aa)). 3 residues coordinate Zn(2+): His-3241, Cys-3257, and Cys-3376.

It in the N-terminal section; belongs to the class I-like SAM-binding methyltransferase superfamily. mRNA cap 0-1 NS5-type methyltransferase family. In terms of assembly, homodimer. Interacts (via N-terminus) with host EXOC1 (via C-terminus); this interaction results in EXOC1 degradation through the proteasome degradation pathway. As to quaternary structure, forms heterodimers with envelope protein E in the endoplasmic reticulum and Golgi. Homodimer; in the endoplasmic reticulum and Golgi. Interacts with protein prM. Interacts with non-structural protein 1. In terms of assembly, homodimer; Homohexamer when secreted. Interacts with envelope protein E. NS1 interacts with NS4B. Interacts with host complement protein CFH; this interaction leads to the degradation of C3. As to quaternary structure, interacts (via N-terminus) with serine protease NS3. Forms a heterodimer with serine protease NS3. May form homooligomers. In terms of assembly, forms a heterodimer with NS2B. Interacts with non-structural protein 2A (via N-terminus). Interacts with NS4B. Interacts with unphosphorylated RNA-directed RNA polymerase NS5; this interaction stimulates RNA-directed RNA polymerase NS5 guanylyltransferase activity. As to quaternary structure, interacts with serine protease NS3. Homodimer. Interacts with host STAT2; this interaction inhibits the phosphorylation of the latter, and, when all viral proteins are present (polyprotein), targets STAT2 for degradation. Interacts with serine protease NS3. In terms of processing, specific enzymatic cleavages in vivo yield mature proteins. Cleavages in the lumen of endoplasmic reticulum are performed by host signal peptidase, whereas cleavages in the cytoplasmic side are performed by serine protease NS3. Signal cleavage at the 2K-4B site requires a prior NS3 protease-mediated cleavage at the 4A-2K site. Post-translationally, cleaved in post-Golgi vesicles by a host furin, releasing the mature small envelope protein M, and peptide pr. This cleavage is incomplete as up to 30% of viral particles still carry uncleaved prM. N-glycosylated. In terms of processing, N-glycosylated. The excreted form is glycosylated and this is required for efficient secretion of the protein from infected cells. Post-translationally, phosphorylated on serines residues. This phosphorylation may trigger NS5 nuclear localization.

The protein localises to the virion. The protein resides in the host nucleus. Its subcellular location is the host cytoplasm. It is found in the host perinuclear region. It localises to the secreted. The protein localises to the virion membrane. The protein resides in the host endoplasmic reticulum membrane. It catalyses the reaction Selective hydrolysis of -Xaa-Xaa-|-Yaa- bonds in which each of the Xaa can be either Arg or Lys and Yaa can be either Ser or Ala.. It carries out the reaction RNA(n) + a ribonucleoside 5'-triphosphate = RNA(n+1) + diphosphate. The enzyme catalyses a ribonucleoside 5'-triphosphate + H2O = a ribonucleoside 5'-diphosphate + phosphate + H(+). The catalysed reaction is ATP + H2O = ADP + phosphate + H(+). It catalyses the reaction a 5'-end (5'-triphosphoguanosine)-ribonucleoside in mRNA + S-adenosyl-L-methionine = a 5'-end (N(7)-methyl 5'-triphosphoguanosine)-ribonucleoside in mRNA + S-adenosyl-L-homocysteine. It carries out the reaction a 5'-end (N(7)-methyl 5'-triphosphoguanosine)-ribonucleoside in mRNA + S-adenosyl-L-methionine = a 5'-end (N(7)-methyl 5'-triphosphoguanosine)-(2'-O-methyl-ribonucleoside) in mRNA + S-adenosyl-L-homocysteine + H(+). Functionally, plays a role in virus budding by binding to the cell membrane and gathering the viral RNA into a nucleocapsid that forms the core of a mature virus particle. During virus entry, may induce genome penetration into the host cytoplasm after hemifusion induced by the surface proteins. Can migrate to the cell nucleus where it modulates host functions. Overcomes the anti-viral effects of host EXOC1 by sequestering and degrading the latter through the proteasome degradation pathway. In terms of biological role, inhibits RNA silencing by interfering with host Dicer. Its function is as follows. Prevents premature fusion activity of envelope proteins in trans-Golgi by binding to envelope protein E at pH6.0. After virion release in extracellular space, gets dissociated from E dimers. Acts as a chaperone for envelope protein E during intracellular virion assembly by masking and inactivating envelope protein E fusion peptide. prM is the only viral peptide matured by host furin in the trans-Golgi network probably to avoid catastrophic activation of the viral fusion activity in acidic Golgi compartment prior to virion release. prM-E cleavage is inefficient, and many virions are only partially matured. These uncleaved prM would play a role in immune evasion. Functionally, may play a role in virus budding. Exerts cytotoxic effects by activating a mitochondrial apoptotic pathway through M ectodomain. May display a viroporin activity. In terms of biological role, binds to host cell surface receptor and mediates fusion between viral and cellular membranes. Envelope protein is synthesized in the endoplasmic reticulum in the form of heterodimer with protein prM. They play a role in virion budding in the ER, and the newly formed immature particle is covered with 60 spikes composed of heterodimer between precursor prM and envelope protein E. The virion is transported to the Golgi apparatus where the low pH causes dissociation of PrM-E heterodimers and formation of E homodimers. prM-E cleavage is inefficient, and many virions are only partially matured. These uncleaved prM would play a role in immune evasion. Its function is as follows. Involved in immune evasion, pathogenesis and viral replication. Once cleaved off the polyprotein, is targeted to three destinations: the viral replication cycle, the plasma membrane and the extracellular compartment. Essential for viral replication. Required for formation of the replication complex and recruitment of other non-structural proteins to the ER-derived membrane structures. Excreted as a hexameric lipoparticle that plays a role against host immune response. Antagonizing the complement function. Binds to the host macrophages and dendritic cells. Inhibits signal transduction originating from Toll-like receptor 3 (TLR3). Component of the viral RNA replication complex that functions in virion assembly and antagonizes the host alpha/beta interferon antiviral response. Functionally, required cofactor for the serine protease function of NS3. May have membrane-destabilizing activity and form viroporins. In terms of biological role, displays three enzymatic activities: serine protease, NTPase and RNA helicase. NS3 serine protease, in association with NS2B, performs its autocleavage and cleaves the polyprotein at dibasic sites in the cytoplasm: C-prM, NS2A-NS2B, NS2B-NS3, NS3-NS4A, NS4A-2K and NS4B-NS5. NS3 RNA helicase binds RNA and unwinds dsRNA in the 3' to 5' direction. Its function is as follows. Regulates the ATPase activity of the NS3 helicase activity. NS4A allows NS3 helicase to conserve energy during unwinding. Functions as a signal peptide for NS4B and is required for the interferon antagonism activity of the latter. Functionally, induces the formation of ER-derived membrane vesicles where the viral replication takes place. Inhibits interferon (IFN)-induced host STAT1 phosphorylation and nuclear translocation, thereby preventing the establishment of cellular antiviral state by blocking the IFN-alpha/beta pathway. Inhibits STAT2 translocation in the nucleus after IFN-alpha treatment. In terms of biological role, replicates the viral (+) and (-) RNA genome, and performs the capping of genomes in the cytoplasm. NS5 methylates viral RNA cap at guanine N-7 and ribose 2'-O positions. Besides its role in RNA genome replication, also prevents the establishment of cellular antiviral state by blocking the interferon-alpha/beta (IFN-alpha/beta) signaling pathway. Inhibits host TYK2 and STAT2 phosphorylation, thereby preventing activation of JAK-STAT signaling pathway. This is Genome polyprotein from Agelaius tricolor (Tricolored blackbird).